The sequence spans 548 residues: Chaperonin GroEL (548 aa).

ATP contacts are provided by residues 30–33, Lys-51, 87–91, Gly-415, 479–481, and Asp-495; these read TLGP, DGTTT, and NAA. Residues 524 to 548 form a disordered region; sequence LPKEDKSSDSSSSPAGGMGGMGGMM. Over residues 539-548 the composition is skewed to gly residues; sequence GGMGGMGGMM.

The protein belongs to the chaperonin (HSP60) family. In terms of assembly, forms a cylinder of 14 subunits composed of two heptameric rings stacked back-to-back. Interacts with the co-chaperonin GroES.

The protein resides in the cytoplasm. It carries out the reaction ATP + H2O + a folded polypeptide = ADP + phosphate + an unfolded polypeptide.. Functionally, together with its co-chaperonin GroES, plays an essential role in assisting protein folding. The GroEL-GroES system forms a nano-cage that allows encapsulation of the non-native substrate proteins and provides a physical environment optimized to promote and accelerate protein folding. The chain is Chaperonin GroEL from Buchnera aphidicola subsp. Acyrthosiphon pisum (strain Tuc7).